The following is a 652-amino-acid chain: DNA ligase (652 aa).

NAD(+) is bound by residues 29–33 (DSEYD), 78–79 (SL), and Glu-107. Lys-109 acts as the N6-AMP-lysine intermediate in catalysis. 4 residues coordinate NAD(+): Arg-130, Glu-164, Lys-278, and Lys-302. Residues Cys-395, Cys-398, Cys-413, and Cys-418 each coordinate Zn(2+). Residues 577 to 652 (VADAALSGLT…VRDEAWLESL (76 aa)) enclose the BRCT domain.

It belongs to the NAD-dependent DNA ligase family. LigA subfamily. It depends on Mg(2+) as a cofactor. Mn(2+) is required as a cofactor.

The enzyme catalyses NAD(+) + (deoxyribonucleotide)n-3'-hydroxyl + 5'-phospho-(deoxyribonucleotide)m = (deoxyribonucleotide)n+m + AMP + beta-nicotinamide D-nucleotide.. Its function is as follows. DNA ligase that catalyzes the formation of phosphodiester linkages between 5'-phosphoryl and 3'-hydroxyl groups in double-stranded DNA using NAD as a coenzyme and as the energy source for the reaction. It is essential for DNA replication and repair of damaged DNA. The protein is DNA ligase of Streptococcus pneumoniae (strain Hungary19A-6).